We begin with the raw amino-acid sequence, 215 residues long: Adenylate kinase (215 aa).

Residue 10–15 coordinates ATP; that stretch reads GAGKGT. The NMP stretch occupies residues 30–59; sequence STGDMLRAAIKAGTPLGLEAKKIIDEGGLV. AMP contacts are provided by residues Thr31, Arg36, 57 to 59, 85 to 88, and Gln92; these read GLV and GFPR. Residues 122–159 form an LID region; sequence GRRVHLASGRTYHVTYNPPKVEGKDDVTGEDLIQRDDD. Residues Arg123 and 132–133 each bind ATP; that span reads TY. The AMP site is built by Arg156 and Arg167. An ATP-binding site is contributed by Gln200.

The protein belongs to the adenylate kinase family. In terms of assembly, monomer.

It is found in the cytoplasm. It carries out the reaction AMP + ATP = 2 ADP. Its pathway is purine metabolism; AMP biosynthesis via salvage pathway; AMP from ADP: step 1/1. Its function is as follows. Catalyzes the reversible transfer of the terminal phosphate group between ATP and AMP. Plays an important role in cellular energy homeostasis and in adenine nucleotide metabolism. The protein is Adenylate kinase of Neisseria meningitidis serogroup B (strain ATCC BAA-335 / MC58).